We begin with the raw amino-acid sequence, 418 residues long: Gamma-glutamyl phosphate reductase (418 aa).

It belongs to the gamma-glutamyl phosphate reductase family.

It localises to the cytoplasm. The catalysed reaction is L-glutamate 5-semialdehyde + phosphate + NADP(+) = L-glutamyl 5-phosphate + NADPH + H(+). It functions in the pathway amino-acid biosynthesis; L-proline biosynthesis; L-glutamate 5-semialdehyde from L-glutamate: step 2/2. Functionally, catalyzes the NADPH-dependent reduction of L-glutamate 5-phosphate into L-glutamate 5-semialdehyde and phosphate. The product spontaneously undergoes cyclization to form 1-pyrroline-5-carboxylate. In Geobacter sulfurreducens (strain ATCC 51573 / DSM 12127 / PCA), this protein is Gamma-glutamyl phosphate reductase.